A 345-amino-acid polypeptide reads, in one-letter code: WD40 repeat protein poxJ (345 aa).

WD repeat units lie at residues 15–49 (ANPP…YDVS), 59–100 (LFNF…EAQQ), 101–146 (VAAH…PLAT), and 250–284 (VNDV…RLKS).

It belongs to the WD repeat rae1 family.

It functions in the pathway secondary metabolite biosynthesis. WD40 repeat protein; part of the gene cluster that mediates the biosynthesis of oxaleimides, cytotoxic compounds containing an unusual disubstituted succinimide moiety. The first step of the pathway is provided by the HR-PKS poxF that serves in a new mode of collaborative biosynthesis with the PKS-NRPS poxE, by providing the olefin containing amino acid substrate via the synthesis of an ACP-bound dec-4-enoate. The cytochrome P450 monooxygenase poxM-catalyzed oxidation at the alpha-position creates the enzyme-bound 2-hydroxydec-4-enoyl-ACP thioester, which may be prone to spontaneous hydrolysis to yield 2-hydroxydec-4-enoic acid due to increased electrophilicity of the carbonyl. 2-hydroxydec-4-enoic acid can then be further oxidized by poxM to yield the alpha-ketoacid 2-oxodec-4-enoicacid, which is reductively aminated by the aminotransferase poxL to yield (S,E)-2-aminodec-4-enoic acid. The Hybrid PKS-NRPS synthetase poxE then performs condensation between the octaketide product of its PKS modules and the amino group of (S,E)-2-aminodec-4-enoic acid which is activated and incorporated by the adenylation domain. The resulting aminoacyl product can be cyclized by the Diels-Alderase PoxQ and reductively released by the reductive (R) domain of poxE to yield an aldehyde intermediate. The released aldehyde is then substrate for a Knoevenagel condensation by the hydrolyase poxO followed by an oxidation at the 5-position of the pyrrolidone ring. The presence of the olefin from the amino acid building block allows for migration of the substituted allyl group to occur. This allylic transposition reaction takes place in a conjugate addition, semipinacol-like fashion to yield a succinimide intermediate. Iterative two-electron oxidations of the C7 methyl of the succinimide intermediate to the carboxylic acid can be catalyzed by one of two remaining cytochrome P450 monooxygenasess poxC or poxD to yield oxaleimide A. Subsequent oxidation yields the maleimide scaffold oxaleimide I. Both oxaleimide A and oxaleimide I can undergo oxidative modifications in the decalin ring to yield the series of products oxaleimides B to H. The protein is WD40 repeat protein poxJ of Penicillium oxalicum (strain 114-2 / CGMCC 5302) (Penicillium decumbens).